The chain runs to 872 residues: DNA mismatch repair protein MutS (872 aa).

Position 623–630 (623–630) interacts with ATP; it reads GPNMAGKS.

This sequence belongs to the DNA mismatch repair MutS family.

Its function is as follows. This protein is involved in the repair of mismatches in DNA. It is possible that it carries out the mismatch recognition step. This protein has a weak ATPase activity. In Trichlorobacter lovleyi (strain ATCC BAA-1151 / DSM 17278 / SZ) (Geobacter lovleyi), this protein is DNA mismatch repair protein MutS.